The sequence spans 413 residues: Serine hydroxymethyltransferase (413 aa).

Residues Leu117 and 121–123 (GHL) contribute to the (6S)-5,6,7,8-tetrahydrofolate site. Lys226 is subject to N6-(pyridoxal phosphate)lysine. 349–351 (SPF) is a (6S)-5,6,7,8-tetrahydrofolate binding site.

Belongs to the SHMT family. As to quaternary structure, homodimer. Pyridoxal 5'-phosphate is required as a cofactor.

The protein localises to the cytoplasm. The enzyme catalyses (6R)-5,10-methylene-5,6,7,8-tetrahydrofolate + glycine + H2O = (6S)-5,6,7,8-tetrahydrofolate + L-serine. Its pathway is one-carbon metabolism; tetrahydrofolate interconversion. The protein operates within amino-acid biosynthesis; glycine biosynthesis; glycine from L-serine: step 1/1. Its function is as follows. Catalyzes the reversible interconversion of serine and glycine with tetrahydrofolate (THF) serving as the one-carbon carrier. This reaction serves as the major source of one-carbon groups required for the biosynthesis of purines, thymidylate, methionine, and other important biomolecules. Also exhibits THF-independent aldolase activity toward beta-hydroxyamino acids, producing glycine and aldehydes, via a retro-aldol mechanism. The polypeptide is Serine hydroxymethyltransferase (Listeria monocytogenes serovar 1/2a (strain ATCC BAA-679 / EGD-e)).